We begin with the raw amino-acid sequence, 245 residues long: 1-(5-phosphoribosyl)-5-[(5-phosphoribosylamino)methylideneamino] imidazole-4-carboxamide isomerase (245 aa).

Residue Asp12 is the Proton acceptor of the active site. The Proton donor role is filled by Asp131.

It belongs to the HisA/HisF family.

It is found in the cytoplasm. It catalyses the reaction 1-(5-phospho-beta-D-ribosyl)-5-[(5-phospho-beta-D-ribosylamino)methylideneamino]imidazole-4-carboxamide = 5-[(5-phospho-1-deoxy-D-ribulos-1-ylimino)methylamino]-1-(5-phospho-beta-D-ribosyl)imidazole-4-carboxamide. It participates in amino-acid biosynthesis; L-histidine biosynthesis; L-histidine from 5-phospho-alpha-D-ribose 1-diphosphate: step 4/9. The protein is 1-(5-phosphoribosyl)-5-[(5-phosphoribosylamino)methylideneamino] imidazole-4-carboxamide isomerase of Thermobifida fusca (strain YX).